A 480-amino-acid polypeptide reads, in one-letter code: UDP-glucose 6-dehydrogenase 5 (480 aa).

Residues 8–13, Asp-33, Arg-38, 86–90, 127–128, and Glu-161 each bind NAD(+); these read GAGYVG, VNTPT, and ST. Substrate-binding positions include 157 to 161, 216 to 223, and 256 to 269; these read EFLAE, KLAANAFL, and RIGP…VGFG. The Nucleophile role is filled by Cys-272. Position 272–275 (272–275) interacts with NAD(+); it reads CFQK. 334-335 contributes to the substrate binding site; the sequence is FK. Arg-342 contributes to the NAD(+) binding site. Position 393 is a phosphoserine (Ser-393). Arg-447 is a binding site for substrate.

It belongs to the UDP-glucose/GDP-mannose dehydrogenase family.

It catalyses the reaction UDP-alpha-D-glucose + 2 NAD(+) + H2O = UDP-alpha-D-glucuronate + 2 NADH + 3 H(+). It participates in nucleotide-sugar biosynthesis; UDP-alpha-D-glucuronate biosynthesis; UDP-alpha-D-glucuronate from UDP-alpha-D-glucose: step 1/1. In terms of biological role, involved in the biosynthesis of UDP-glucuronic acid (UDP-GlcA), providing nucleotide sugars for cell-wall polymers. In Oryza sativa subsp. japonica (Rice), this protein is UDP-glucose 6-dehydrogenase 5 (UGD5).